Reading from the N-terminus, the 386-residue chain is Protein lin-8 (386 aa).

Residues 175–285 (LGLEARRASK…FSQQYGGGGS (111 aa)) are sufficient for interaction with lin-35. The interval 212-240 (EEPYEETGSNWSDPAPEPSQSKSQSPEAK) is disordered. A compositionally biased stretch (low complexity) spans 229-240 (PSQSKSQSPEAK).

The protein belongs to the lin-8 family. Interacts with lin-35 (via C-terminus). As to expression, widely expressed throughout development, with particularly prominent expression in the germline and in neuronal nuclei of the head (at protein level).

It localises to the nucleus. In terms of biological role, acts as a synthetic multivulva class A (synMuvA) protein and redundantly inhibits lin-3/EGF expression to prevent inappropriate vulva induction. The protein is Protein lin-8 of Caenorhabditis elegans.